Here is a 137-residue protein sequence, read N- to C-terminus: Nucleoside diphosphate kinase (137 aa).

Residues Lys9, Phe57, Arg85, Thr91, Arg102, and Asn112 each coordinate ATP. His115 (pros-phosphohistidine intermediate) is an active-site residue.

This sequence belongs to the NDK family. Homotetramer. Requires Mg(2+) as cofactor.

The protein localises to the cytoplasm. The catalysed reaction is a 2'-deoxyribonucleoside 5'-diphosphate + ATP = a 2'-deoxyribonucleoside 5'-triphosphate + ADP. It catalyses the reaction a ribonucleoside 5'-diphosphate + ATP = a ribonucleoside 5'-triphosphate + ADP. Functionally, major role in the synthesis of nucleoside triphosphates other than ATP. The ATP gamma phosphate is transferred to the NDP beta phosphate via a ping-pong mechanism, using a phosphorylated active-site intermediate. This chain is Nucleoside diphosphate kinase, found in Aliarcobacter butzleri (strain RM4018) (Arcobacter butzleri).